The following is a 405-amino-acid chain: FAD-dependent monooxygenase thnD (405 aa).

The FAD site is built by Glu-30, Ala-45, Arg-106, Asp-308, and Gly-321.

The protein belongs to the paxM FAD-dependent monooxygenase family. FAD is required as a cofactor.

FAD-dependent monooxygenase; part of the gene cluster that produces the tetronate natural products trihazones. Transcription analysis of thnD confirmed this gene is expressed, hence its role in the biosynthetic pathway remains cryptic. The pathway begins with the formation of trihazone A by the hybrid PKS-NRPS synthetase thnA and the trans-enoyl reductase thnE. Trihazone A is further decarboxylated by the 2-oxoglutarate-dependent dioxygenase thnC to produce trihazone D. The function of the FAD-dependent monooxygenase thnD has still to be identified. In Trichoderma harzianum (Hypocrea lixii), this protein is FAD-dependent monooxygenase thnD.